The following is a 340-amino-acid chain: Outer membrane protein B (340 aa).

A signal peptide spans 1 to 26 (MSSKLVNYLRLTFLSFLGIASTSLDA).

The protein belongs to the chlamydial OMP family.

It localises to the cell outer membrane. This chain is Outer membrane protein B (ompB), found in Chlamydia trachomatis serovar D (strain ATCC VR-885 / DSM 19411 / UW-3/Cx).